Reading from the N-terminus, the 1496-residue chain is Chromosome partition protein MukB (1496 aa).

Position 63-70 (63-70 (GGNGAGKS)) interacts with ATP. 2 coiled-coil regions span residues 328–493 (KLEL…QRLS) and 536–632 (KMQA…APAW). The tract at residues 694–811 (PDGSDDVRLN…EVPLFGRAAR (118 aa)) is flexible hinge. Coiled coils occupy residues 861 to 1171 (NPEE…SAEE) and 1235 to 1291 (IDAI…LQNI). The segment covering 1082-1091 (RARSRRDELQ) has biased composition (basic and acidic residues). A disordered region spans residues 1082-1101 (RARSRRDELQQRLSQQRSRK).

It belongs to the SMC family. MukB subfamily. Homodimerization via its hinge domain. Binds to DNA via its C-terminal region. Interacts, and probably forms a ternary complex, with MukE and MukF via its C-terminal region. The complex formation is stimulated by calcium or magnesium. Interacts with tubulin-related protein FtsZ.

Its subcellular location is the cytoplasm. It localises to the nucleoid. Functionally, plays a central role in chromosome condensation, segregation and cell cycle progression. Functions as a homodimer, which is essential for chromosome partition. Involved in negative DNA supercoiling in vivo, and by this means organize and compact chromosomes. May achieve or facilitate chromosome segregation by condensation DNA from both sides of a centrally located replisome during cell division. The chain is Chromosome partition protein MukB from Actinobacillus pleuropneumoniae serotype 3 (strain JL03).